Consider the following 715-residue polypeptide: Fatty acid oxidation complex subunit alpha (715 aa).

The enoyl-CoA hydratase/isomerase stretch occupies residues 1–190; the sequence is MIYEGKAITV…KVGAVDAVVA (190 aa). Aspartate 297 contacts substrate. The tract at residues 312–715 is 3-hydroxyacyl-CoA dehydrogenase; the sequence is HDVKQAAVLG…MAKNGQRFFN (404 aa). NAD(+)-binding positions include methionine 325, aspartate 344, 401–403, lysine 408, and serine 430; that span reads VVE. Histidine 451 serves as the catalytic For 3-hydroxyacyl-CoA dehydrogenase activity. Position 454 (asparagine 454) interacts with NAD(+). Substrate is bound by residues asparagine 501 and tyrosine 660.

It in the N-terminal section; belongs to the enoyl-CoA hydratase/isomerase family. In the C-terminal section; belongs to the 3-hydroxyacyl-CoA dehydrogenase family. In terms of assembly, heterotetramer of two alpha chains (FadB) and two beta chains (FadA).

The catalysed reaction is a (3S)-3-hydroxyacyl-CoA + NAD(+) = a 3-oxoacyl-CoA + NADH + H(+). It catalyses the reaction a (3S)-3-hydroxyacyl-CoA = a (2E)-enoyl-CoA + H2O. The enzyme catalyses a 4-saturated-(3S)-3-hydroxyacyl-CoA = a (3E)-enoyl-CoA + H2O. It carries out the reaction (3S)-3-hydroxybutanoyl-CoA = (3R)-3-hydroxybutanoyl-CoA. The catalysed reaction is a (3Z)-enoyl-CoA = a 4-saturated (2E)-enoyl-CoA. It catalyses the reaction a (3E)-enoyl-CoA = a 4-saturated (2E)-enoyl-CoA. Its pathway is lipid metabolism; fatty acid beta-oxidation. Functionally, involved in the aerobic and anaerobic degradation of long-chain fatty acids via beta-oxidation cycle. Catalyzes the formation of 3-oxoacyl-CoA from enoyl-CoA via L-3-hydroxyacyl-CoA. It can also use D-3-hydroxyacyl-CoA and cis-3-enoyl-CoA as substrate. This Pseudomonas entomophila (strain L48) protein is Fatty acid oxidation complex subunit alpha.